The sequence spans 227 residues: Protein lin-28 (227 aa).

Residues M1–S17 show a composition bias toward polar residues. The segment at M1–P27 is disordered. Positions R52–E120 constitute a CSD domain. 2 CCHC-type zinc fingers span residues R143–N160 and K166–E183. 8 residues coordinate Zn(2+): C144, C147, H153, C158, C168, C171, H176, and C181. Positions C181–E227 are disordered.

The protein belongs to the lin-28 family. Component of a complex at least containing lep-2, lin-28 and the long non-coding RNA lep-5, which mediates the degradation of lin-28. Cleavage by caspase ced-3 during larval development probably induces lin-28 degradation.

It is found in the cytoplasm. Heterochronic protein which controls the choice of stage specific cell fates. Regulates the timing of the second larval stage events (L2 events) in the hypodermis. May negatively regulate the larval to adult transition via the suppression of the microRNA (miRNA) let-7 during L3. Through this regulatory role, controls the timing of the sexual maturation of the nervous system. Also has a role in the fox-1-sex-1-mediated determination of sexual fate. Plays a role in governing the developmental timing of male tail tip morphogenesis. Plays a role in controlling the seam cell number during larval stages. Plays a role in vulval development. The chain is Protein lin-28 from Caenorhabditis elegans.